The primary structure comprises 354 residues: Replication factor C subunit 5 (354 aa).

40 to 47 (YGPSGSGK) lines the ATP pocket.

This sequence belongs to the activator 1 small subunits family. As to quaternary structure, heterotetramer of subunits RFC2, RFC3, RFC4 and RFC5 that can form a complex with RFC1. In terms of tissue distribution, expressed in roots, leaves, shoot apical meristem (SAM), flag leaves and panicles.

It localises to the nucleus. Its function is as follows. May be involved in DNA replication and thus regulate cell proliferation. This chain is Replication factor C subunit 5 (RFC5), found in Oryza sativa subsp. japonica (Rice).